Reading from the N-terminus, the 384-residue chain is A-type ATP synthase subunit C (384 aa).

This sequence belongs to the V-ATPase V0D/AC39 subunit family. In terms of assembly, has multiple subunits with at least A(3), B(3), C, D, E, F, H, I and proteolipid K(x).

The protein resides in the cell membrane. Functionally, component of the A-type ATP synthase that produces ATP from ADP in the presence of a proton gradient across the membrane. The sequence is that of A-type ATP synthase subunit C from Methanobrevibacter smithii (strain ATCC 35061 / DSM 861 / OCM 144 / PS).